The sequence spans 254 residues: MPQQIELRNITLQAAQPLVHGVSLTLQRGRVLALVGGSGSGKSLTCAATLGILPAGVRQTAGEILADGKPVSPYALRGIKIATIMQNPRSAFNPLHTMHTHARETCLALGKPADDATLTAAIEAVGLENAARVLKLYPFEMSGGMLQRMMIAMAVLCESPFIIADEPTTDLDVVAQARILDLLESIMQKQAPGMLLVTHDMGVVARLADDVAVMSQGKIVEQGDVETLFNAPKHTVTRSLVSAHLALYGMELAS.

The ABC transporter domain occupies 2–241; sequence PQQIELRNIT…PKHTVTRSLV (240 aa). 36-43 is an ATP binding site; it reads GGSGSGKS.

It belongs to the ABC transporter superfamily. Nickel importer (TC 3.A.1.5.3) family. In terms of assembly, the complex is composed of two ATP-binding proteins (NikD and NikE), two transmembrane proteins (NikB and NikC) and a solute-binding protein (NikA).

It localises to the cell inner membrane. It catalyses the reaction Ni(2+)(out) + ATP + H2O = Ni(2+)(in) + ADP + phosphate + H(+). Its function is as follows. Part of the ABC transporter complex NikABCDE involved in nickel import. Responsible for energy coupling to the transport system. The sequence is that of Nickel import ATP-binding protein NikD from Shigella flexneri.